We begin with the raw amino-acid sequence, 512 residues long: Maturase K (512 aa).

Belongs to the intron maturase 2 family. MatK subfamily.

It is found in the plastid. The protein localises to the chloroplast. Functionally, usually encoded in the trnK tRNA gene intron. Probably assists in splicing its own and other chloroplast group II introns. This is Maturase K from Amorphophallus paeoniifolius (Whitespot giant arum).